A 310-amino-acid polypeptide reads, in one-letter code: HTH-type transcriptional activator TtdR (310 aa).

Residues 6-63 (PLAKDLQVLVEIVHSGSFSAAAATLGQTPAFVTKRIQILENTLATTLLNRSARGVALT) enclose the HTH lysR-type domain. Positions 23-42 (FSAAAATLGQTPAFVTKRIQ) form a DNA-binding region, H-T-H motif.

The protein belongs to the LysR transcriptional regulatory family.

Positive regulator required for L-tartrate-dependent anaerobic growth on glycerol. Induces expression of the ttdA-ttdB-ygjE operon. The polypeptide is HTH-type transcriptional activator TtdR (ttdR) (Escherichia coli O6:H1 (strain CFT073 / ATCC 700928 / UPEC)).